A 758-amino-acid chain; its full sequence is DNA ligase (758 aa).

The interval 1 to 28 is disordered; sequence MPENFGAMRQDGLVSTSESDSPAPAATP. Residues 60–64, 109–110, and Glu-148 each bind NAD(+); these read DAEFD and SL. The active-site N6-AMP-lysine intermediate is the Lys-150. NAD(+) is bound by residues Arg-171, Glu-208, Lys-324, and Lys-348. Positions 442, 445, 461, and 467 each coordinate Zn(2+). The BRCT domain maps to 660–749; the sequence is SVRRTLAGLT…PDHSAEAEEN (90 aa). The tract at residues 735 to 758 is disordered; sequence LLAHGPDHSAEAEENESEGSTTND.

This sequence belongs to the NAD-dependent DNA ligase family. LigA subfamily. Mg(2+) is required as a cofactor. Requires Mn(2+) as cofactor.

The catalysed reaction is NAD(+) + (deoxyribonucleotide)n-3'-hydroxyl + 5'-phospho-(deoxyribonucleotide)m = (deoxyribonucleotide)n+m + AMP + beta-nicotinamide D-nucleotide.. Its function is as follows. DNA ligase that catalyzes the formation of phosphodiester linkages between 5'-phosphoryl and 3'-hydroxyl groups in double-stranded DNA using NAD as a coenzyme and as the energy source for the reaction. It is essential for DNA replication and repair of damaged DNA. The chain is DNA ligase from Renibacterium salmoninarum (strain ATCC 33209 / DSM 20767 / JCM 11484 / NBRC 15589 / NCIMB 2235).